Reading from the N-terminus, the 230-residue chain is Ribonuclease 3 (230 aa).

The RNase III domain maps to 5 to 125 (YSRLYKILGY…IIGAIYLDSD (121 aa)). Glu-40 is a Mg(2+) binding site. The active site involves Asp-44. Residues Asp-111 and Glu-114 each contribute to the Mg(2+) site. Residue Glu-114 is part of the active site. In terms of domain architecture, DRBM spans 153–223 (DSKSKLQEIL…AEKMIQILSQ (71 aa)).

It belongs to the ribonuclease III family. Homodimer. It depends on Mg(2+) as a cofactor.

The protein resides in the cytoplasm. The catalysed reaction is Endonucleolytic cleavage to 5'-phosphomonoester.. Its function is as follows. Digests double-stranded RNA. Involved in the processing of primary rRNA transcript to yield the immediate precursors to the large and small rRNAs (23S and 16S). Processes some mRNAs, and tRNAs when they are encoded in the rRNA operon. Processes pre-crRNA and tracrRNA of type II CRISPR loci if present in the organism. This Francisella philomiragia subsp. philomiragia (strain ATCC 25017 / CCUG 19701 / FSC 153 / O#319-036) protein is Ribonuclease 3.